A 27-amino-acid polypeptide reads, in one-letter code: Dermaseptin-S4 (27 aa).

This sequence belongs to the frog skin active peptide (FSAP) family. Dermaseptin subfamily. As to quaternary structure, monomer and oligomer. Forms aggregates in aqueous environments. As to expression, expressed by the skin glands.

It is found in the secreted. Potent antimicrobial peptide with activity against bacteria and protozoa. Also has activity against fungi. Also shows activity against enveloped herpes simplex virus type 1. Probably acts by disturbing membrane functions with its amphipathic structure. Binds to healthy erythrocytes (this binding is receptor independent), and has strong hemolytic activity. Does not bind to P.falciparum infected erythrocytes, but accumulates within the parasite. Kills the parasite, and only at high concentrations has a hemolytic activity on the host cell. In vitro, shows high spermicidal activities. This is Dermaseptin-S4 from Phyllomedusa sauvagei (Sauvage's leaf frog).